A 600-amino-acid chain; its full sequence is Glutamine--fructose-6-phosphate aminotransferase [isomerizing] (600 aa).

The Nucleophile; for GATase activity role is filled by Cys2. Residues 2-217 enclose the Glutamine amidotransferase type-2 domain; it reads CGIVGYIGQL…DKEMVIVTDK (216 aa). 2 SIS domains span residues 283–422 and 452–590; these read ISNA…SRGK and IARE…VDKP. Lys595 functions as the For Fru-6P isomerization activity in the catalytic mechanism.

In terms of assembly, homodimer.

The protein localises to the cytoplasm. It carries out the reaction D-fructose 6-phosphate + L-glutamine = D-glucosamine 6-phosphate + L-glutamate. Its function is as follows. Catalyzes the first step in hexosamine metabolism, converting fructose-6P into glucosamine-6P using glutamine as a nitrogen source. This chain is Glutamine--fructose-6-phosphate aminotransferase [isomerizing], found in Bacillus licheniformis (strain ATCC 14580 / DSM 13 / JCM 2505 / CCUG 7422 / NBRC 12200 / NCIMB 9375 / NCTC 10341 / NRRL NRS-1264 / Gibson 46).